The primary structure comprises 311 residues: Methionyl-tRNA formyltransferase (311 aa).

109-112 contributes to the (6S)-5,6,7,8-tetrahydrofolate binding site; that stretch reads SLLP.

This sequence belongs to the Fmt family.

It catalyses the reaction L-methionyl-tRNA(fMet) + (6R)-10-formyltetrahydrofolate = N-formyl-L-methionyl-tRNA(fMet) + (6S)-5,6,7,8-tetrahydrofolate + H(+). Attaches a formyl group to the free amino group of methionyl-tRNA(fMet). The formyl group appears to play a dual role in the initiator identity of N-formylmethionyl-tRNA by promoting its recognition by IF2 and preventing the misappropriation of this tRNA by the elongation apparatus. The chain is Methionyl-tRNA formyltransferase from Staphylococcus aureus (strain MW2).